Here is a 140-residue protein sequence, read N- to C-terminus: Large ribosomal subunit protein uL14 (140 aa).

This sequence belongs to the universal ribosomal protein uL14 family. As to quaternary structure, part of the 50S ribosomal subunit. Forms a cluster with proteins L3 and L24e, part of which may contact the 16S rRNA in 2 intersubunit bridges.

Its function is as follows. Binds to 23S rRNA. Forms part of two intersubunit bridges in the 70S ribosome. The polypeptide is Large ribosomal subunit protein uL14 (Aeropyrum pernix (strain ATCC 700893 / DSM 11879 / JCM 9820 / NBRC 100138 / K1)).